A 562-amino-acid polypeptide reads, in one-letter code: Phosphoglucomutase-1 (562 aa).

Met-1 carries the N-acetylmethionine modification. N6-acetyllysine is present on Lys-16. Arg-23 is a binding site for alpha-D-glucose 1,6-bisphosphate. Thr-115 is modified (phosphothreonine). Position 117 (Ser-117) interacts with alpha-D-glucose 1,6-bisphosphate. Residue Ser-117 is the Phosphoserine intermediate of the active site. Ser-117 is a binding site for Mg(2+). Phosphoserine is present on residues Ser-117 and Ser-134. Thr-185 is modified (phosphothreonine). A phosphoserine mark is found at Ser-206 and Ser-213. Asp-288, Asp-290, and Asp-292 together coordinate Mg(2+). Alpha-D-glucose 1,6-bisphosphate-binding residues include Asp-292 and Arg-293. Lys-349 carries the post-translational modification N6-acetyllysine. Position 353 is a phosphotyrosine (Tyr-353). Thr-357 is an alpha-D-glucose 1,6-bisphosphate binding site. Residue Ser-369 is modified to Phosphoserine. Residues Glu-376, Ser-378, and Lys-389 each contribute to the alpha-D-glucose 1,6-bisphosphate site. A Phosphoserine modification is found at Ser-378. The residue at position 419 (Lys-419) is an N6-succinyllysine. A Phosphothreonine; by PAK1 modification is found at Thr-467. A phosphoserine mark is found at Ser-477, Ser-485, and Ser-505. The residue at position 507 (Thr-507) is a Phosphothreonine. Phosphoserine is present on residues Ser-509 and Ser-541.

This sequence belongs to the phosphohexose mutase family. In terms of assembly, monomer. Mg(2+) serves as cofactor. In terms of processing, phosphorylation at Thr-467 by PAK1 significantly enhances enzymatic activity.

It is found in the cytoplasm. The catalysed reaction is alpha-D-glucose 1-phosphate = alpha-D-glucose 6-phosphate. It carries out the reaction O-phospho-L-seryl-[protein] + alpha-D-glucose 1-phosphate = alpha-D-glucose 1,6-bisphosphate + L-seryl-[protein]. The enzyme catalyses alpha-D-glucose 1,6-bisphosphate + L-seryl-[protein] = O-phospho-L-seryl-[protein] + alpha-D-glucose 6-phosphate. Functionally, catalyzes the reversible isomerization of alpha-D-glucose 1-phosphate to alpha-D-glucose 6-phosphate. The mechanism proceeds via the intermediate compound alpha-D-glucose 1,6-bisphosphate. This enzyme participates in both the breakdown and synthesis of glucose. This is Phosphoglucomutase-1 (PGM1) from Macaca fascicularis (Crab-eating macaque).